Reading from the N-terminus, the 133-residue chain is Small ribosomal subunit protein uS9 (133 aa).

Belongs to the universal ribosomal protein uS9 family.

The sequence is that of Small ribosomal subunit protein uS9 from Ureaplasma urealyticum serovar 10 (strain ATCC 33699 / Western).